A 546-amino-acid chain; its full sequence is Glutamate--tRNA ligase (546 aa).

The 'HIGH' region signature appears at 42–52 (PSPTGFIHLGN). The short motif at 293 to 297 (KLSKR) is the 'KMSKS' region element. Lysine 296 is a binding site for ATP.

Belongs to the class-I aminoacyl-tRNA synthetase family. Glutamate--tRNA ligase type 1 subfamily. Monomer.

The protein localises to the cytoplasm. It catalyses the reaction tRNA(Glu) + L-glutamate + ATP = L-glutamyl-tRNA(Glu) + AMP + diphosphate. Its function is as follows. Catalyzes the attachment of glutamate to tRNA(Glu) in a two-step reaction: glutamate is first activated by ATP to form Glu-AMP and then transferred to the acceptor end of tRNA(Glu). This chain is Glutamate--tRNA ligase, found in Acetivibrio thermocellus (strain ATCC 27405 / DSM 1237 / JCM 9322 / NBRC 103400 / NCIMB 10682 / NRRL B-4536 / VPI 7372) (Clostridium thermocellum).